Reading from the N-terminus, the 179-residue chain is Large ribosomal subunit protein uL5 (179 aa).

It belongs to the universal ribosomal protein uL5 family. Part of the 50S ribosomal subunit; part of the 5S rRNA/L5/L18/L25 subcomplex. Contacts the 5S rRNA and the P site tRNA. Forms a bridge to the 30S subunit in the 70S ribosome.

This is one of the proteins that bind and probably mediate the attachment of the 5S RNA into the large ribosomal subunit, where it forms part of the central protuberance. In the 70S ribosome it contacts protein S13 of the 30S subunit (bridge B1b), connecting the 2 subunits; this bridge is implicated in subunit movement. Contacts the P site tRNA; the 5S rRNA and some of its associated proteins might help stabilize positioning of ribosome-bound tRNAs. This chain is Large ribosomal subunit protein uL5, found in Xylella fastidiosa (strain M23).